Here is an 829-residue protein sequence, read N- to C-terminus: Trimethylamine-N-oxide reductase (829 aa).

A signal peptide (tat-type signal) is located at residues 1–31; sequence MNRRDFLKGIASSSFVVLGGSSVLTPLNALA. Ser180 lines the Mo-bis(molybdopterin guanine dinucleotide) pocket.

Belongs to the prokaryotic molybdopterin-containing oxidoreductase family. Mo-bis(molybdopterin guanine dinucleotide) is required as a cofactor. In terms of processing, predicted to be exported by the Tat system. The position of the signal peptide cleavage has been experimentally proven.

The protein localises to the periplasm. The enzyme catalyses trimethylamine + 2 Fe(III)-[cytochrome c] + H2O = trimethylamine N-oxide + 2 Fe(II)-[cytochrome c] + 3 H(+). Reduces trimethylamine-N-oxide (TMAO) into trimethylamine; an anaerobic reaction coupled to energy-yielding reactions. The chain is Trimethylamine-N-oxide reductase (torA) from Shewanella massilia.